The sequence spans 421 residues: uncharacterized protein (421 aa).

This is an uncharacterized protein from Caenorhabditis elegans.